A 97-amino-acid chain; its full sequence is Aspartyl/glutamyl-tRNA(Asn/Gln) amidotransferase subunit C (97 aa).

The protein belongs to the GatC family. In terms of assembly, heterotrimer of A, B and C subunits.

It catalyses the reaction L-glutamyl-tRNA(Gln) + L-glutamine + ATP + H2O = L-glutaminyl-tRNA(Gln) + L-glutamate + ADP + phosphate + H(+). The catalysed reaction is L-aspartyl-tRNA(Asn) + L-glutamine + ATP + H2O = L-asparaginyl-tRNA(Asn) + L-glutamate + ADP + phosphate + 2 H(+). Allows the formation of correctly charged Asn-tRNA(Asn) or Gln-tRNA(Gln) through the transamidation of misacylated Asp-tRNA(Asn) or Glu-tRNA(Gln) in organisms which lack either or both of asparaginyl-tRNA or glutaminyl-tRNA synthetases. The reaction takes place in the presence of glutamine and ATP through an activated phospho-Asp-tRNA(Asn) or phospho-Glu-tRNA(Gln). This is Aspartyl/glutamyl-tRNA(Asn/Gln) amidotransferase subunit C from Prochlorococcus marinus (strain MIT 9211).